The primary structure comprises 299 residues: UDP-N-acetylenolpyruvoylglucosamine reductase (299 aa).

Residues Val31–Gly192 form the FAD-binding PCMH-type domain. Residue Arg172 is part of the active site. Ser221 (proton donor) is an active-site residue. Glu291 is a catalytic residue.

It belongs to the MurB family. FAD serves as cofactor.

The protein localises to the cytoplasm. It carries out the reaction UDP-N-acetyl-alpha-D-muramate + NADP(+) = UDP-N-acetyl-3-O-(1-carboxyvinyl)-alpha-D-glucosamine + NADPH + H(+). The protein operates within cell wall biogenesis; peptidoglycan biosynthesis. Its function is as follows. Cell wall formation. This is UDP-N-acetylenolpyruvoylglucosamine reductase from Anaplasma marginale (strain St. Maries).